We begin with the raw amino-acid sequence, 427 residues long: Serine--tRNA ligase (427 aa).

L-serine is bound at residue 231 to 233 (TAE). Residues 262–264 (RRE) and valine 278 each bind ATP. Glutamate 285 contributes to the L-serine binding site. ATP is bound at residue 349–352 (EVSS). Residue serine 384 participates in L-serine binding.

The protein belongs to the class-II aminoacyl-tRNA synthetase family. Type-1 seryl-tRNA synthetase subfamily. Homodimer. The tRNA molecule binds across the dimer.

The protein localises to the cytoplasm. It catalyses the reaction tRNA(Ser) + L-serine + ATP = L-seryl-tRNA(Ser) + AMP + diphosphate + H(+). The enzyme catalyses tRNA(Sec) + L-serine + ATP = L-seryl-tRNA(Sec) + AMP + diphosphate + H(+). The protein operates within aminoacyl-tRNA biosynthesis; selenocysteinyl-tRNA(Sec) biosynthesis; L-seryl-tRNA(Sec) from L-serine and tRNA(Sec): step 1/1. In terms of biological role, catalyzes the attachment of serine to tRNA(Ser). Is also able to aminoacylate tRNA(Sec) with serine, to form the misacylated tRNA L-seryl-tRNA(Sec), which will be further converted into selenocysteinyl-tRNA(Sec). The polypeptide is Serine--tRNA ligase (Chlamydia pneumoniae (Chlamydophila pneumoniae)).